Reading from the N-terminus, the 438-residue chain is Putative hydrolase MSMEG_3995/MSMEI_3903 (438 aa).

The Zn(2+) site is built by aspartate 95, aspartate 104, glutamate 143, and histidine 208. Lysine 217 is covalently cross-linked (Isoglutamyl lysine isopeptide (Lys-Gln) (interchain with Q-Cter in protein Pup)). Histidine 400 serves as a coordination point for Zn(2+).

This sequence belongs to the peptidase M20 family. The cofactor is Zn(2+).

The polypeptide is Putative hydrolase MSMEG_3995/MSMEI_3903 (Mycolicibacterium smegmatis (strain ATCC 700084 / mc(2)155) (Mycobacterium smegmatis)).